The sequence spans 535 residues: SIR4-interacting protein SIF2 (535 aa).

Positions T4–E36 constitute a LisH domain. The interval E104–S140 is disordered. Acidic residues predominate over residues T130 to S140. S137 carries the post-translational modification Phosphoserine. WD repeat units follow at residues V155–R186, K218–N248, F259–N289, G316–Q345, G357–H387, G399–S428, V440–D470, and S503–A534.

In terms of assembly, homotetramer. Interacts with SIR4 N-terminal domain. Interacts with a complex composed of SIN3 and RPD3. Identified in the Set3C complex with HOS2, HST1, SNT1, CPR1, HOS4/YIL112W and SET3.

Its subcellular location is the nucleus. In terms of biological role, antagonizes telomeric silencing in yeast. May recruit SIR4 to non-telomeric sites or repression. This is SIR4-interacting protein SIF2 (SIF2) from Saccharomyces cerevisiae (strain ATCC 204508 / S288c) (Baker's yeast).